The chain runs to 156 residues: Snaclec A6 (156 aa).

A signal peptide spans 1–23; it reads MGRSISVSFGLLVVFLSLSGTGA. Disulfide bonds link C27–C38, C55–C154, and C129–C146. The C-type lectin domain occupies 34-155; it reads HEGHCYKVFN…CGKPYRFTCE (122 aa).

It belongs to the snaclec family. As to quaternary structure, heterodimer; disulfide-linked. In terms of tissue distribution, expressed by the venom gland.

It localises to the secreted. Functionally, interferes with one step of hemostasis (modulation of platelet aggregation, or coagulation cascade, for example). This Macrovipera lebetinus (Levantine viper) protein is Snaclec A6.